A 207-amino-acid polypeptide reads, in one-letter code: Dephospho-CoA kinase (207 aa).

Residues 8–207 (AIALTGSIGS…LPCVDCVQSS (200 aa)) form the DPCK domain. An ATP-binding site is contributed by 16–21 (GSGKST).

It belongs to the CoaE family.

It is found in the cytoplasm. The enzyme catalyses 3'-dephospho-CoA + ATP = ADP + CoA + H(+). The protein operates within cofactor biosynthesis; coenzyme A biosynthesis; CoA from (R)-pantothenate: step 5/5. Functionally, catalyzes the phosphorylation of the 3'-hydroxyl group of dephosphocoenzyme A to form coenzyme A. This chain is Dephospho-CoA kinase, found in Helicobacter hepaticus (strain ATCC 51449 / 3B1).